Here is a 111-residue protein sequence, read N- to C-terminus: Ribonuclease P protein component (111 aa).

This sequence belongs to the RnpA family. In terms of assembly, consists of a catalytic RNA component (M1 or rnpB) and a protein subunit.

It carries out the reaction Endonucleolytic cleavage of RNA, removing 5'-extranucleotides from tRNA precursor.. Functionally, RNaseP catalyzes the removal of the 5'-leader sequence from pre-tRNA to produce the mature 5'-terminus. It can also cleave other RNA substrates such as 4.5S RNA. The protein component plays an auxiliary but essential role in vivo by binding to the 5'-leader sequence and broadening the substrate specificity of the ribozyme. This is Ribonuclease P protein component from Borrelia garinii subsp. bavariensis (strain ATCC BAA-2496 / DSM 23469 / PBi) (Borreliella bavariensis).